A 333-amino-acid polypeptide reads, in one-letter code: Fructose-1,6-bisphosphatase class 1 (333 aa).

Residues Glu90, Asp112, Leu114, and Asp115 each coordinate Mg(2+). Residues 115 to 118 (DGSS), Asn207, and Lys273 each bind substrate. Glu279 provides a ligand contact to Mg(2+).

Belongs to the FBPase class 1 family. Homotetramer. Requires Mg(2+) as cofactor.

It is found in the cytoplasm. The enzyme catalyses beta-D-fructose 1,6-bisphosphate + H2O = beta-D-fructose 6-phosphate + phosphate. The protein operates within carbohydrate biosynthesis; gluconeogenesis. The sequence is that of Fructose-1,6-bisphosphatase class 1 from Aromatoleum aromaticum (strain DSM 19018 / LMG 30748 / EbN1) (Azoarcus sp. (strain EbN1)).